We begin with the raw amino-acid sequence, 224 residues long: Iron-sulfur cluster repair protein ScdA (224 aa).

This sequence belongs to the RIC family. ScdA subfamily. In terms of assembly, homodimer.

The protein localises to the cytoplasm. Functionally, di-iron-containing protein involved in the repair of iron-sulfur clusters damaged by oxidative and nitrosative stress conditions. The protein is Iron-sulfur cluster repair protein ScdA of Staphylococcus epidermidis (strain ATCC 35984 / DSM 28319 / BCRC 17069 / CCUG 31568 / BM 3577 / RP62A).